The sequence spans 195 residues: Pyruvoyl-dependent arginine decarboxylase AaxB (195 aa).

A Pyruvic acid (Ser) modification is found at Ser53.

It belongs to the pyruvoyl-dependent arginine decarboxylase family. In terms of assembly, trimer of an alpha-beta dimer. Requires pyruvate as cofactor.

It is found in the cytoplasm. It catalyses the reaction L-arginine + H(+) = agmatine + CO2. Functionally, part of the AaxABC system, catalyzes the decarboxylation of L-arginine. The arginine uptake by the bacterium in the macrophage may be a virulence factor against the host innate immune response. The sequence is that of Pyruvoyl-dependent arginine decarboxylase AaxB (aaxB) from Chlamydia abortus (strain DSM 27085 / S26/3) (Chlamydophila abortus).